The chain runs to 62 residues: MGKVHGSLARAGKVRGQTPKVAKQDKKKKPRGRAHKRLQHNRRFVTAVVGFGKKRGPNSSEK.

Residues 1-38 are disordered; the sequence is MGKVHGSLARAGKVRGQTPKVAKQDKKKKPRGRAHKRL. Basic residues predominate over residues 25–38; that stretch reads DKKKKPRGRAHKRL.

This sequence belongs to the eukaryotic ribosomal protein eS30 family.

The protein is Small ribosomal subunit protein eS30z/eS30y/eS30x (RPS30A) of Arabidopsis thaliana (Mouse-ear cress).